Consider the following 417-residue polypeptide: N-acetylmuramoyl-L-alanine amidase AmiC (417 aa).

A signal peptide (tat-type signal) is located at residues 1–31 (MSGSNTAISRRRLLQGAGAMWLLSVSQVSLA). The disordered stretch occupies residues 166 to 185 (LEKQVPPAQSGPQPGKAGRD). A MurNAc-LAA domain is found at 190–404 (IMLDPGHGGE…VAESILAGIK (215 aa)).

It belongs to the N-acetylmuramoyl-L-alanine amidase 3 family. Predicted to be exported by the Tat system. The position of the signal peptide cleavage has not been experimentally proven.

The protein resides in the periplasm. The enzyme catalyses Hydrolyzes the link between N-acetylmuramoyl residues and L-amino acid residues in certain cell-wall glycopeptides.. Its function is as follows. Cell-wall hydrolase involved in septum cleavage during cell division. This chain is N-acetylmuramoyl-L-alanine amidase AmiC (amiC), found in Escherichia coli O6:H1 (strain CFT073 / ATCC 700928 / UPEC).